The chain runs to 152 residues: Large-conductance mechanosensitive channel (152 aa).

2 helical membrane passes run 14 to 34 (VIDL…VKSL) and 84 to 104 (VGQF…VFLL).

The protein belongs to the MscL family. In terms of assembly, homopentamer.

It localises to the cell inner membrane. Channel that opens in response to stretch forces in the membrane lipid bilayer. May participate in the regulation of osmotic pressure changes within the cell. The chain is Large-conductance mechanosensitive channel from Laribacter hongkongensis (strain HLHK9).